The sequence spans 120 residues: Large ribosomal subunit protein bL20 (120 aa).

The protein belongs to the bacterial ribosomal protein bL20 family.

In terms of biological role, binds directly to 23S ribosomal RNA and is necessary for the in vitro assembly process of the 50S ribosomal subunit. It is not involved in the protein synthesizing functions of that subunit. The protein is Large ribosomal subunit protein bL20 of Methylobacillus flagellatus (strain ATCC 51484 / DSM 6875 / VKM B-1610 / KT).